The primary structure comprises 217 residues: Large ribosomal subunit protein uL3 (217 aa).

Over residues 134-146 (GRATHGNSRSHNV) the composition is skewed to polar residues. Residues 134-154 (GRATHGNSRSHNVPGSIGMAQ) are disordered. N5-methylglutamine is present on Gln-154.

It belongs to the universal ribosomal protein uL3 family. Part of the 50S ribosomal subunit. Forms a cluster with proteins L14 and L19. Methylated by PrmB.

In terms of biological role, one of the primary rRNA binding proteins, it binds directly near the 3'-end of the 23S rRNA, where it nucleates assembly of the 50S subunit. The chain is Large ribosomal subunit protein uL3 from Burkholderia lata (strain ATCC 17760 / DSM 23089 / LMG 22485 / NCIMB 9086 / R18194 / 383).